We begin with the raw amino-acid sequence, 185 residues long: Endoribonuclease YbeY (185 aa).

His142, His146, and His152 together coordinate Zn(2+).

This sequence belongs to the endoribonuclease YbeY family. Zn(2+) serves as cofactor.

The protein resides in the cytoplasm. Functionally, single strand-specific metallo-endoribonuclease involved in late-stage 70S ribosome quality control and in maturation of the 3' terminus of the 16S rRNA. This Parvibaculum lavamentivorans (strain DS-1 / DSM 13023 / NCIMB 13966) protein is Endoribonuclease YbeY.